A 455-amino-acid polypeptide reads, in one-letter code: UDP-N-acetylmuramate--L-alanine ligase (455 aa).

109-115 serves as a coordination point for ATP; sequence GTHGKTT.

Belongs to the MurCDEF family.

It is found in the cytoplasm. It carries out the reaction UDP-N-acetyl-alpha-D-muramate + L-alanine + ATP = UDP-N-acetyl-alpha-D-muramoyl-L-alanine + ADP + phosphate + H(+). It functions in the pathway cell wall biogenesis; peptidoglycan biosynthesis. Its function is as follows. Cell wall formation. This Caldicellulosiruptor saccharolyticus (strain ATCC 43494 / DSM 8903 / Tp8T 6331) protein is UDP-N-acetylmuramate--L-alanine ligase.